The chain runs to 274 residues: NH(3)-dependent NAD(+) synthetase (274 aa).

Residue 46 to 53 (GISGGQDS) coordinates ATP. Asp52 contributes to the Mg(2+) binding site. Position 140 (Arg140) interacts with deamido-NAD(+). Position 160 (Thr160) interacts with ATP. Glu165 provides a ligand contact to Mg(2+). Residues Lys173 and Asp180 each contribute to the deamido-NAD(+) site. ATP contacts are provided by Lys189 and Thr211. 260-261 (HK) is a deamido-NAD(+) binding site.

This sequence belongs to the NAD synthetase family. As to quaternary structure, homodimer.

It catalyses the reaction deamido-NAD(+) + NH4(+) + ATP = AMP + diphosphate + NAD(+) + H(+). The protein operates within cofactor biosynthesis; NAD(+) biosynthesis; NAD(+) from deamido-NAD(+) (ammonia route): step 1/1. Its function is as follows. Catalyzes the ATP-dependent amidation of deamido-NAD to form NAD. Uses ammonia as a nitrogen source. The protein is NH(3)-dependent NAD(+) synthetase of Streptococcus pyogenes serotype M6 (strain ATCC BAA-946 / MGAS10394).